Consider the following 518-residue polypeptide: Glutamate--cysteine ligase (518 aa).

It belongs to the glutamate--cysteine ligase type 1 family. Type 1 subfamily.

The catalysed reaction is L-cysteine + L-glutamate + ATP = gamma-L-glutamyl-L-cysteine + ADP + phosphate + H(+). It functions in the pathway sulfur metabolism; glutathione biosynthesis; glutathione from L-cysteine and L-glutamate: step 1/2. The polypeptide is Glutamate--cysteine ligase (Shigella dysenteriae serotype 1 (strain Sd197)).